Reading from the N-terminus, the 238-residue chain is Peroxisomal coenzyme A diphosphatase NUDT7 (238 aa).

Lys20 is modified (N6-succinyllysine). One can recognise a Nudix hydrolase domain in the interval 37–172 (YNKYSVLLPL…VTRLGHRFIN (136 aa)). A Nudix box motif is present at residues 77 to 98 (KRDPTDMDDAATALREAQEEVG). 2 residues coordinate Mg(2+): Glu92 and Glu96. The short motif at 236–238 (SRL) is the Microbody targeting signal element.

The protein belongs to the Nudix hydrolase family. PCD1 subfamily. Monomer. The cofactor is Mn(2+). It depends on Mg(2+) as a cofactor. Expressed in liver, kidney, pancreas, pituitary, small intestine, spleen, heart and placenta. Weakly expressed in brain.

The protein localises to the peroxisome. The catalysed reaction is hexanoyl-CoA + H2O = hexanoyl-4'-phosphopantetheine + adenosine 3',5'-bisphosphate + 2 H(+). It carries out the reaction octanoyl-CoA + H2O = S-octanoyl-4'-phosphopantetheine + adenosine 3',5'-bisphosphate + 2 H(+). It catalyses the reaction butanoyl-CoA + H2O = S-butanoyl-4'-phosphopantetheine + adenosine 3',5'-bisphosphate + 2 H(+). The enzyme catalyses decanoyl-CoA + H2O = decanoyl-4'-phosphopantetheine + adenosine 3',5'-bisphosphate + 2 H(+). The catalysed reaction is dodecanoyl-CoA + H2O = S-dodecanoyl-4'-phosphopantetheine + adenosine 3',5'-bisphosphate + 2 H(+). It carries out the reaction tetradecanoyl-CoA + H2O = tetradecanoyl-4'-phosphopantetheine + adenosine 3',5'-bisphosphate + 2 H(+). It catalyses the reaction choloyl-CoA + H2O = S-choloyl-4'-phosphopantetheine + adenosine 3',5'-bisphosphate + 2 H(+). The enzyme catalyses 3alpha,7alpha,12alpha-trihydroxy-5beta-cholestan-26-oyl-CoA + H2O = 3alpha,7alpha,12alpha-trihydroxy-5beta-cholestan-26-oyl-4'-phosphopantetheine + adenosine 3',5'-bisphosphate + 2 H(+). The catalysed reaction is acetyl-CoA + H2O = S-acetyl-4'-phosphopantetheine + adenosine 3',5'-bisphosphate + 2 H(+). It carries out the reaction CoA + H2O = (R)-4'-phosphopantetheine + adenosine 3',5'-bisphosphate + 2 H(+). It catalyses the reaction propanoyl-CoA + H2O = propanoyl-4'-phosphopantetheine + adenosine 3',5'-bisphosphate + 2 H(+). The enzyme catalyses malonyl-CoA + H2O = malonyl-4'-phosphopantetheine + adenosine 3',5'-bisphosphate + 2 H(+). The catalysed reaction is succinyl-CoA + H2O = succinyl-4'-phosphopantetheine + adenosine 3',5'-bisphosphate + 2 H(+). It carries out the reaction a 5'-end CoA-ribonucleoside in mRNA + H2O = a 5'-end phospho-adenosine-phospho-ribonucleoside in mRNA + (R)-4'-phosphopantetheine + 2 H(+). Inhibited by fluoride. In terms of biological role, fatty acyl-coenzyme A (CoA) diphosphatase that hydrolyzes fatty acyl-CoA to yield acyl-4'-phosphopantetheine and adenosine 3',5'-bisphosphate. Cleaves CoA, CoA esters and oxidized CoA with similar efficiencies. Preferentially hydrolyzes medium-chain acyl-CoAs and bile acid-CoAs. Has no activity toward NDP-sugars, CDP-alcohols, (deoxy)nucleoside 5'-triphosphates, nucleoside 5'-di or monophosphates, diadenosine polyphosphates, NAD, NADH, NADP, NADPH or thymidine-5'-monophospho-p-nitrophenyl ester. May be required to eliminate oxidized CoA from peroxisomes, or regulate CoA and acyl-CoA levels in this organelle in response to metabolic demand. Does not play a role in U8 snoRNA decapping activity. Binds U8 snoRNA. Exhibits decapping activity towards dpCoA-capped RNAs in vitro. The polypeptide is Peroxisomal coenzyme A diphosphatase NUDT7 (Homo sapiens (Human)).